Consider the following 431-residue polypeptide: Peptidase B (431 aa).

Mn(2+) is bound by residues K196 and D201. Residue K208 is part of the active site. The Mn(2+) site is built by D219, D278, and E280. The active site involves R282.

It belongs to the peptidase M17 family. Homohexamer. Mn(2+) serves as cofactor.

The protein localises to the cytoplasm. It carries out the reaction Release of an N-terminal amino acid, Xaa, from a peptide or arylamide. Xaa is preferably Glu or Asp but may be other amino acids, including Leu, Met, His, Cys and Gln.. Functionally, probably plays an important role in intracellular peptide degradation. The chain is Peptidase B from Photorhabdus laumondii subsp. laumondii (strain DSM 15139 / CIP 105565 / TT01) (Photorhabdus luminescens subsp. laumondii).